The chain runs to 82 residues: Ice-structuring protein B (82 aa).

A signal peptide spans 1–23 (MALSLFTVGQLIFLFWTMRITEA). A propeptide spans 24–44 (RPDPAAKAAPAAAAVPAAAAP) (removed by a dipeptidylpeptidase). Arginine amide is present on Arg-81.

Belongs to the type-I AFP family. Post-translationally, amidated. As to expression, detected in liver (at protein level).

It is found in the secreted. It localises to the extracellular space. Contributes to protect fish blood from freezing at subzero sea water temperatures. Lowers the blood freezing point. Binds to nascent ice crystals and prevents further growth. This is Ice-structuring protein B from Pseudopleuronectes americanus (Winter flounder).